We begin with the raw amino-acid sequence, 382 residues long: Lipid-A-disaccharide synthase (382 aa).

This sequence belongs to the LpxB family.

The catalysed reaction is 2-N,3-O-bis[(3R)-3-hydroxytetradecanoyl]-alpha-D-glucosaminyl 1-phosphate + UDP-2-N,3-O-bis[(3R)-3-hydroxytetradecanoyl]-alpha-D-glucosamine = lipid A disaccharide (E. coli) + UDP + H(+). It carries out the reaction a lipid X + a UDP-2-N,3-O-bis[(3R)-3-hydroxyacyl]-alpha-D-glucosamine = a lipid A disaccharide + UDP + H(+). The protein operates within glycolipid biosynthesis; lipid IV(A) biosynthesis; lipid IV(A) from (3R)-3-hydroxytetradecanoyl-[acyl-carrier-protein] and UDP-N-acetyl-alpha-D-glucosamine: step 5/6. In terms of biological role, condensation of UDP-2,3-diacylglucosamine and 2,3-diacylglucosamine-1-phosphate to form lipid A disaccharide, a precursor of lipid A, a phosphorylated glycolipid that anchors the lipopolysaccharide to the outer membrane of the cell. In Shigella flexneri serotype 5b (strain 8401), this protein is Lipid-A-disaccharide synthase.